The chain runs to 206 residues: Oligoribonuclease (206 aa).

The Exonuclease domain maps to Leu20–Leu183. The active site involves Tyr141.

The protein belongs to the oligoribonuclease family.

It is found in the cytoplasm. Functionally, 3'-to-5' exoribonuclease specific for small oligoribonucleotides. The polypeptide is Oligoribonuclease (Burkholderia ambifaria (strain ATCC BAA-244 / DSM 16087 / CCUG 44356 / LMG 19182 / AMMD) (Burkholderia cepacia (strain AMMD))).